Here is a 589-residue protein sequence, read N- to C-terminus: tRNA (guanine(26)-N(2))-dimethyltransferase 2 (589 aa).

In terms of domain architecture, Trm1 methyltransferase spans 9–465; it reads TVIKEGEAEI…APMEVIWDIM (457 aa). Arginine 36 provides a ligand contact to S-adenosyl-L-methionine. Residues 51-122 form a disordered region; sequence KQEHEAKSSK…RFAPREPKPP (72 aa). 2 stretches are compositionally biased toward basic and acidic residues: residues 68–81 and 106–122; these read VIEK…KEET and DPAK…PKPP. S-adenosyl-L-methionine contacts are provided by arginine 134, aspartate 152, and valine 185. 4 residues coordinate Zn(2+): cysteine 315, cysteine 318, cysteine 350, and cysteine 353. Residues 550-589 form a disordered region; that stretch reads LSQHHEELKEEDEEAEPEDNVQDKVDPKRQKTATDNITST. Residues 558-569 show a composition bias toward acidic residues; sequence KEEDEEAEPEDN.

It belongs to the class I-like SAM-binding methyltransferase superfamily. Trm1 family.

It carries out the reaction guanosine(26) in tRNA + 2 S-adenosyl-L-methionine = N(2)-dimethylguanosine(26) in tRNA + 2 S-adenosyl-L-homocysteine + 2 H(+). Functionally, dimethylates a single guanine residue at position 26 of most tRNAs using S-adenosyl-L-methionine as donor of the methyl groups. This is tRNA (guanine(26)-N(2))-dimethyltransferase 2 from Arabidopsis thaliana (Mouse-ear cress).